Consider the following 180-residue polypeptide: Putative manganese efflux pump MntP (180 aa).

6 helical membrane-spanning segments follow: residues 6 to 26 (LFALAVALGTDAFSLCIGIGI), 34 to 54 (IALISLTVLIFHILMPLLGWY), 67 to 87 (ASIAGALLLLYLGGKMIWDTI), 103 to 123 (GGLLLLSASVSMDALSVGFTL), 130 to 150 (LVLAAGVIGLVAGMMTFAGLT), and 159 to 179 (IGERAELVGGIILVGIGVKLF).

The protein belongs to the MntP (TC 9.B.29) family.

Its subcellular location is the cell membrane. Probably functions as a manganese efflux pump. The chain is Putative manganese efflux pump MntP from Desulforamulus reducens (strain ATCC BAA-1160 / DSM 100696 / MI-1) (Desulfotomaculum reducens).